The primary structure comprises 36 residues: SPLEPVYPGDNATPEEMAQYAAELRRYINMLTRPRY.

Tyr-36 carries the tyrosine amide modification.

It belongs to the NPY family.

It localises to the secreted. Its function is as follows. Hormone secreted by pancreatic cells that acts as a regulator of pancreatic and gastrointestinal functions probably by signaling through the G protein-coupled receptor NPY4R2. The polypeptide is Pancreatic polypeptide (PPY) (Ceratotherium simum (White rhinoceros)).